The sequence spans 139 residues: Small ribosomal subunit protein uS12 (139 aa).

Asp102 is modified (3-methylthioaspartic acid).

It belongs to the universal ribosomal protein uS12 family. In terms of assembly, part of the 30S ribosomal subunit. Contacts proteins S8 and S17. May interact with IF1 in the 30S initiation complex.

In terms of biological role, with S4 and S5 plays an important role in translational accuracy. Its function is as follows. Interacts with and stabilizes bases of the 16S rRNA that are involved in tRNA selection in the A site and with the mRNA backbone. Located at the interface of the 30S and 50S subunits, it traverses the body of the 30S subunit contacting proteins on the other side and probably holding the rRNA structure together. The combined cluster of proteins S8, S12 and S17 appears to hold together the shoulder and platform of the 30S subunit. The polypeptide is Small ribosomal subunit protein uS12 (Mycoplasma capricolum subsp. capricolum (strain California kid / ATCC 27343 / NCTC 10154)).